A 453-amino-acid chain; its full sequence is Serine incorporator 1 (453 aa).

Gly2 carries the N-myristoyl glycine lipid modification. At Gly2–Arg39 the chain is on the cytoplasmic side. The chain crosses the membrane as a helical span at residues Leu40 to Gly60. At Met61–Lys88 the chain is on the lumenal side. The chain crosses the membrane as a helical span at residues Ala89 to Ile109. At Lys110 to Asn123 the chain is on the cytoplasmic side. Residues Gly124–Pro144 form a helical membrane-spanning segment. Residues Glu145–Val151 lie on the Lumenal side of the membrane. Residues Trp152–Ile172 form a helical membrane-spanning segment. Over Asp173–Ala197 the chain is Cytoplasmic. The helical transmembrane segment at Leu198 to Val218 threads the bilayer. Over Tyr219–Ala231 the chain is Lumenal. Residues Phe232–Ile252 form a helical membrane-spanning segment. At Gln253–Ser259 the chain is on the cytoplasmic side. A helical membrane pass occupies residues Gly260–Thr280. The Lumenal segment spans residues Asn281 to Ser309. A helical transmembrane segment spans residues Val310–Tyr330. Over Ser331–Ser387 the chain is Cytoplasmic. Phosphoserine is present on Ser351. Thr352 carries the post-translational modification Phosphothreonine. The residue at position 364 (Ser364) is a Phosphoserine. The helical transmembrane segment at Phe388–Tyr408 threads the bilayer. At Arg409–Lys426 the chain is on the lumenal side. A helical membrane pass occupies residues Ile427–Leu447. Topologically, residues Thr448 to Asp453 are cytoplasmic.

This sequence belongs to the TDE1 family. In terms of assembly, interacts with SPTLC1.

The protein localises to the endoplasmic reticulum membrane. Functionally, enhances the incorporation of serine into phosphatidylserine and sphingolipids. In Bos taurus (Bovine), this protein is Serine incorporator 1 (SERINC1).